The primary structure comprises 98 residues: NADH-ubiquinone oxidoreductase chain 4L (98 aa).

3 helical membrane passes run 1–21 (MSMV…GLLM), 29–49 (SLLC…VTIL), and 61–81 (IILL…LVMV).

The protein belongs to the complex I subunit 4L family. As to quaternary structure, core subunit of respiratory chain NADH dehydrogenase (Complex I) which is composed of 45 different subunits.

It localises to the mitochondrion inner membrane. It carries out the reaction a ubiquinone + NADH + 5 H(+)(in) = a ubiquinol + NAD(+) + 4 H(+)(out). Its function is as follows. Core subunit of the mitochondrial membrane respiratory chain NADH dehydrogenase (Complex I) which catalyzes electron transfer from NADH through the respiratory chain, using ubiquinone as an electron acceptor. Part of the enzyme membrane arm which is embedded in the lipid bilayer and involved in proton translocation. The sequence is that of NADH-ubiquinone oxidoreductase chain 4L (MT-ND4L) from Callorhinus ursinus (Northern fur seal).